A 147-amino-acid chain; its full sequence is Ribosome maturation factor RimP (147 aa).

Belongs to the RimP family.

It is found in the cytoplasm. In terms of biological role, required for maturation of 30S ribosomal subunits. The chain is Ribosome maturation factor RimP from Sulfurihydrogenibium azorense (strain DSM 15241 / OCM 825 / Az-Fu1).